The chain runs to 387 residues: S-adenosylmethionine synthase (387 aa).

Histidine 16 provides a ligand contact to ATP. Aspartate 18 contacts Mg(2+). Residue glutamate 44 participates in K(+) binding. L-methionine is bound by residues glutamate 57 and glutamine 100. The flexible loop stretch occupies residues 100–110 (QSADIAVGVDE). ATP contacts are provided by residues 165-167 (DAK), aspartate 241, 247-248 (RK), alanine 264, and lysine 268. L-methionine is bound at residue aspartate 241. Lysine 272 lines the L-methionine pocket.

This sequence belongs to the AdoMet synthase family. As to quaternary structure, homotetramer; dimer of dimers. Mg(2+) is required as a cofactor. It depends on K(+) as a cofactor.

It localises to the cytoplasm. It catalyses the reaction L-methionine + ATP + H2O = S-adenosyl-L-methionine + phosphate + diphosphate. Its pathway is amino-acid biosynthesis; S-adenosyl-L-methionine biosynthesis; S-adenosyl-L-methionine from L-methionine: step 1/1. Catalyzes the formation of S-adenosylmethionine (AdoMet) from methionine and ATP. The overall synthetic reaction is composed of two sequential steps, AdoMet formation and the subsequent tripolyphosphate hydrolysis which occurs prior to release of AdoMet from the enzyme. The protein is S-adenosylmethionine synthase of Marinomonas sp. (strain MWYL1).